Consider the following 348-residue polypeptide: GMP reductase (348 aa).

Position 108-131 (108-131) interacts with NADP(+); the sequence is ADFIKLRQILALSPSLKFICIDVA. The K(+) site is built by Gly181 and Gly183. Cys186 acts as the Thioimidate intermediate in catalysis. 216-239 contributes to the NADP(+) binding site; it reads IVSDGGCTMPGDVAKAFGGGADFV.

This sequence belongs to the IMPDH/GMPR family. GuaC type 1 subfamily. As to quaternary structure, homotetramer.

It catalyses the reaction IMP + NH4(+) + NADP(+) = GMP + NADPH + 2 H(+). In terms of biological role, catalyzes the irreversible NADPH-dependent deamination of GMP to IMP. It functions in the conversion of nucleobase, nucleoside and nucleotide derivatives of G to A nucleotides, and in maintaining the intracellular balance of A and G nucleotides. The sequence is that of GMP reductase from Edwardsiella ictaluri (strain 93-146).